A 156-amino-acid chain; its full sequence is Small ribosomal subunit protein uS7 (156 aa).

It belongs to the universal ribosomal protein uS7 family. In terms of assembly, part of the 30S ribosomal subunit. Contacts proteins S9 and S11.

Its function is as follows. One of the primary rRNA binding proteins, it binds directly to 16S rRNA where it nucleates assembly of the head domain of the 30S subunit. Is located at the subunit interface close to the decoding center, probably blocks exit of the E-site tRNA. This chain is Small ribosomal subunit protein uS7, found in Geotalea daltonii (strain DSM 22248 / JCM 15807 / FRC-32) (Geobacter daltonii).